A 213-amino-acid chain; its full sequence is Probable GTP-binding protein EngB (213 aa).

One can recognise an EngB-type G domain in the interval 30–204 (EGFEVAFAGR…YTALAGWMEL (175 aa)). Residues 38 to 45 (GRSNAGKS), 64 to 68 (GRTQL), 82 to 85 (DLPG), 149 to 152 (TKAD), and 182 to 185 (LFSA) contribute to the GTP site. 2 residues coordinate Mg(2+): Ser45 and Thr66.

It belongs to the TRAFAC class TrmE-Era-EngA-EngB-Septin-like GTPase superfamily. EngB GTPase family. Requires Mg(2+) as cofactor.

In terms of biological role, necessary for normal cell division and for the maintenance of normal septation. This Pseudomonas fluorescens (strain SBW25) protein is Probable GTP-binding protein EngB.